A 121-amino-acid chain; its full sequence is uncharacterized protein (121 aa).

The tract at residues 20 to 98 (NEVRTSQSEV…PYYHGSKAST (79 aa)) is disordered. The segment covering 35-51 (KKSDNGEKDEKEEKELN) has biased composition (basic and acidic residues).

This is an uncharacterized protein from Invertebrate iridescent virus 6 (IIV-6).